Reading from the N-terminus, the 396-residue chain is NADH-quinone oxidoreductase subunit D (396 aa).

This sequence belongs to the complex I 49 kDa subunit family. NDH-1 is composed of 14 different subunits. Subunits NuoB, C, D, E, F, and G constitute the peripheral sector of the complex.

It is found in the cell inner membrane. The catalysed reaction is a quinone + NADH + 5 H(+)(in) = a quinol + NAD(+) + 4 H(+)(out). NDH-1 shuttles electrons from NADH, via FMN and iron-sulfur (Fe-S) centers, to quinones in the respiratory chain. The immediate electron acceptor for the enzyme in this species is believed to be ubiquinone. Couples the redox reaction to proton translocation (for every two electrons transferred, four hydrogen ions are translocated across the cytoplasmic membrane), and thus conserves the redox energy in a proton gradient. The protein is NADH-quinone oxidoreductase subunit D of Mesorhizobium japonicum (strain LMG 29417 / CECT 9101 / MAFF 303099) (Mesorhizobium loti (strain MAFF 303099)).